We begin with the raw amino-acid sequence, 448 residues long: Phosphoglucosamine mutase (448 aa).

Catalysis depends on serine 100, which acts as the Phosphoserine intermediate. Serine 100, aspartate 240, aspartate 242, and aspartate 244 together coordinate Mg(2+). A Phosphoserine modification is found at serine 100.

The protein belongs to the phosphohexose mutase family. Requires Mg(2+) as cofactor. Activated by phosphorylation.

The enzyme catalyses alpha-D-glucosamine 1-phosphate = D-glucosamine 6-phosphate. In terms of biological role, catalyzes the conversion of glucosamine-6-phosphate to glucosamine-1-phosphate. The protein is Phosphoglucosamine mutase of Bacillus velezensis (strain DSM 23117 / BGSC 10A6 / LMG 26770 / FZB42) (Bacillus amyloliquefaciens subsp. plantarum).